The primary structure comprises 1128 residues: Scavenger receptor cysteine-rich domain superfamily protein (1128 aa).

The N-terminal stretch at 1-24 is a signal peptide; sequence MTSLRRGNICWVAVCAALLTLTRG. Over 25–1051 the chain is Extracellular; sequence IDVIAKPSRT…VGAQAGPAGG (1027 aa). 9 SRCR domains span residues 40-140, 143-245, 248-348, 351-450, 453-553, 555-654, 657-757, 759-866, and 868-968; these read VQLV…VVCN, VRLA…VICT, IRLV…VICT, VRLV…AKCQ, VQLV…VVCR, IRLA…VVCR, LRLA…VVCT, LRLT…VLCK, and IRLV…VQCK. 21 disulfides stabilise this stretch: cysteine 65-cysteine 129, cysteine 78-cysteine 139, cysteine 109-cysteine 119, cysteine 168-cysteine 234, cysteine 181-cysteine 244, cysteine 212-cysteine 222, cysteine 273-cysteine 337, cysteine 286-cysteine 347, cysteine 316-cysteine 326, cysteine 376-cysteine 439, cysteine 389-cysteine 449, cysteine 419-cysteine 429, cysteine 478-cysteine 542, cysteine 491-cysteine 552, cysteine 522-cysteine 532, cysteine 583-cysteine 644, cysteine 596-cysteine 653, cysteine 624-cysteine 634, cysteine 682-cysteine 746, cysteine 695-cysteine 756, and cysteine 726-cysteine 736. Asparagine 87 carries an N-linked (GlcNAc...) asparagine glycan. Residues asparagine 190 and asparagine 194 are each glycosylated (N-linked (GlcNAc...) asparagine). An N-linked (GlcNAc...) asparagine glycan is attached at asparagine 229. An N-linked (GlcNAc...) asparagine glycan is attached at asparagine 422. N-linked (GlcNAc...) asparagine glycans are attached at residues asparagine 601 and asparagine 612. Residues asparagine 765, asparagine 808, asparagine 834, and asparagine 936 are each glycosylated (N-linked (GlcNAc...) asparagine). 6 disulfides stabilise this stretch: cysteine 803–cysteine 865, cysteine 833–cysteine 843, cysteine 906–cysteine 967, cysteine 937–cysteine 947, cysteine 971–cysteine 1013, and cysteine 999–cysteine 1026. The Sushi domain occupies 969–1028; the sequence is AGCDWPGPIRHGSFSPNRSSYDPLTTIDVKCDAGYELMGSKTLQCVTGCDWSRPTPECQR. Residue asparagine 985 is glycosylated (N-linked (GlcNAc...) asparagine). The N-linked (GlcNAc...) asparagine glycan is linked to asparagine 1031. Residues 1052-1072 traverse the membrane as a helical segment; sequence VMLIIGIILGAVVMMLIACVA. The Cytoplasmic segment spans residues 1073 to 1128; sequence LYLKGRNKNIGRGNPATTSAIWKPKKEFDELKEPVLSFSAMTAGGAGPEDGMGEDI.

From the mid-gastrula stage, expressed only in mesenchyme cells that are migrating toward the body wall. At the brachiolaria stage, expressed in presumptive coelomocytes of the coelomic pouch. Also expressed in adult coelomocytes (at protein level).

It is found in the cytoplasmic vesicle membrane. Functionally, involved in aggregate formation and phagocytosis by larval mesenchyme cells and adult coelomocytes. Binds to bacteria and may act as an opsonin in the innate immune system. The sequence is that of Scavenger receptor cysteine-rich domain superfamily protein from Patiria pectinifera (Starfish).